We begin with the raw amino-acid sequence, 599 residues long: 2-succinyl-5-enolpyruvyl-6-hydroxy-3-cyclohexene-1-carboxylate synthase (599 aa).

The segment covering 1–21 has biased composition (low complexity); it reads MTSENPLDPNNAYAAADDAPL. Residues 1 to 35 are disordered; that stretch reads MTSENPLDPNNAYAAADDAPLSEGDPTGAPADSGS.

The protein belongs to the TPP enzyme family. MenD subfamily. Homodimer. The cofactor is Mg(2+). Requires Mn(2+) as cofactor. It depends on thiamine diphosphate as a cofactor.

The catalysed reaction is isochorismate + 2-oxoglutarate + H(+) = 5-enolpyruvoyl-6-hydroxy-2-succinyl-cyclohex-3-ene-1-carboxylate + CO2. The protein operates within quinol/quinone metabolism; 1,4-dihydroxy-2-naphthoate biosynthesis; 1,4-dihydroxy-2-naphthoate from chorismate: step 2/7. It participates in quinol/quinone metabolism; menaquinone biosynthesis. Its function is as follows. Catalyzes the thiamine diphosphate-dependent decarboxylation of 2-oxoglutarate and the subsequent addition of the resulting succinic semialdehyde-thiamine pyrophosphate anion to isochorismate to yield 2-succinyl-5-enolpyruvyl-6-hydroxy-3-cyclohexene-1-carboxylate (SEPHCHC). The polypeptide is 2-succinyl-5-enolpyruvyl-6-hydroxy-3-cyclohexene-1-carboxylate synthase (Arthrobacter sp. (strain FB24)).